Here is a 429-residue protein sequence, read N- to C-terminus: Phosphomethylpyrimidine synthase (429 aa).

Substrate contacts are provided by residues asparagine 66, methionine 94, tyrosine 123, histidine 162, 184–186 (SRG), 225–228 (DALR), and glutamate 264. A Zn(2+)-binding site is contributed by histidine 268. Residue tyrosine 291 participates in substrate binding. Histidine 332 provides a ligand contact to Zn(2+). Residues cysteine 408, cysteine 411, and cysteine 415 each coordinate [4Fe-4S] cluster.

It belongs to the ThiC family. It depends on [4Fe-4S] cluster as a cofactor.

It carries out the reaction 5-amino-1-(5-phospho-beta-D-ribosyl)imidazole + S-adenosyl-L-methionine = 4-amino-2-methyl-5-(phosphooxymethyl)pyrimidine + CO + 5'-deoxyadenosine + formate + L-methionine + 3 H(+). It functions in the pathway cofactor biosynthesis; thiamine diphosphate biosynthesis. Catalyzes the synthesis of the hydroxymethylpyrimidine phosphate (HMP-P) moiety of thiamine from aminoimidazole ribotide (AIR) in a radical S-adenosyl-L-methionine (SAM)-dependent reaction. This is Phosphomethylpyrimidine synthase from Sulfurisphaera tokodaii (strain DSM 16993 / JCM 10545 / NBRC 100140 / 7) (Sulfolobus tokodaii).